Consider the following 168-residue polypeptide: Ribulose bisphosphate carboxylase small subunit, chloroplastic (168 aa).

Residues methionine 1–arginine 28 constitute a chloroplast transit peptide.

It belongs to the RuBisCO small chain family. As to quaternary structure, heterohexadecamer of 8 large and 8 small subunits.

Its subcellular location is the plastid. It is found in the chloroplast. Functionally, ruBisCO catalyzes two reactions: the carboxylation of D-ribulose 1,5-bisphosphate, the primary event in carbon dioxide fixation, as well as the oxidative fragmentation of the pentose substrate. Both reactions occur simultaneously and in competition at the same active site. Although the small subunit is not catalytic it is essential for maximal activity. This Chlamydomonas moewusii (Chlamydomonas eugametos) protein is Ribulose bisphosphate carboxylase small subunit, chloroplastic.